The primary structure comprises 651 residues: Acetyl-coenzyme A synthetase (651 aa).

CoA is bound by residues Arg189 to Lys192, Thr311, and Asn335. ATP-binding positions include Gly387 to Pro389, Asp411 to Thr416, Asp500, and Arg515. Ser523 contacts CoA. Arg526 contacts ATP. Mg(2+) contacts are provided by Val537, His539, and Val542. CoA is bound at residue Arg584. An N6-acetyllysine modification is found at Lys609.

Belongs to the ATP-dependent AMP-binding enzyme family. Mg(2+) is required as a cofactor. Post-translationally, acetylated. Deacetylation by the SIR2-homolog deacetylase activates the enzyme.

It catalyses the reaction acetate + ATP + CoA = acetyl-CoA + AMP + diphosphate. Functionally, catalyzes the conversion of acetate into acetyl-CoA (AcCoA), an essential intermediate at the junction of anabolic and catabolic pathways. AcsA undergoes a two-step reaction. In the first half reaction, AcsA combines acetate with ATP to form acetyl-adenylate (AcAMP) intermediate. In the second half reaction, it can then transfer the acetyl group from AcAMP to the sulfhydryl group of CoA, forming the product AcCoA. This chain is Acetyl-coenzyme A synthetase, found in Rhizobium etli (strain CIAT 652).